The chain runs to 209 residues: Transmembrane emp24 domain-containing protein B (209 aa).

The N-terminal stretch at 1–24 (MNKTNQLINICILVTLFLIGSSSA) is a signal peptide. Residues 25–174 (LTLQVEPKSQ…RDTSESTNAR (150 aa)) lie on the Lumenal side of the membrane. The 86-residue stretch at 34–119 (QECFYNFIES…AKVVTFTWAS (86 aa)) folds into the GOLD domain. A helical transmembrane segment spans residues 175 to 195 (VVWWTIAEVIVLVVMGVGQIW). Residues 196 to 209 (YLRKWFDNKSTGRV) lie on the Cytoplasmic side of the membrane.

It belongs to the EMP24/GP25L family.

The protein resides in the cytoplasmic vesicle membrane. Its function is as follows. Could have a role in the budding of coatomer-coated and other species of coated vesicles. The chain is Transmembrane emp24 domain-containing protein B (empB) from Dictyostelium discoideum (Social amoeba).